Here is a 244-residue protein sequence, read N- to C-terminus: tRNA (guanine-N(1)-)-methyltransferase (244 aa).

S-adenosyl-L-methionine contacts are provided by residues Gly-113 and 133 to 138; that span reads IGDFVL.

It belongs to the RNA methyltransferase TrmD family. As to quaternary structure, homodimer.

The protein localises to the cytoplasm. It catalyses the reaction guanosine(37) in tRNA + S-adenosyl-L-methionine = N(1)-methylguanosine(37) in tRNA + S-adenosyl-L-homocysteine + H(+). In terms of biological role, specifically methylates guanosine-37 in various tRNAs. The polypeptide is tRNA (guanine-N(1)-)-methyltransferase (Bacillus pumilus (strain SAFR-032)).